The following is a 121-amino-acid chain: Dihydroneopterin aldolase (121 aa).

Residues glutamate 22, tyrosine 54, and 73–74 (IE) contribute to the substrate site. The active-site Proton donor/acceptor is lysine 100.

The protein belongs to the DHNA family. In terms of assembly, homooctamer. Four molecules assemble into a ring, and two rings come together to give a cylinder with a hole of at least 13 a diameter.

The enzyme catalyses 7,8-dihydroneopterin = 6-hydroxymethyl-7,8-dihydropterin + glycolaldehyde. The catalysed reaction is 7,8-dihydroneopterin = 7,8-dihydromonapterin. Its pathway is cofactor biosynthesis; tetrahydrofolate biosynthesis; 2-amino-4-hydroxy-6-hydroxymethyl-7,8-dihydropteridine diphosphate from 7,8-dihydroneopterin triphosphate: step 3/4. In terms of biological role, catalyzes the conversion of 7,8-dihydroneopterin to 6-hydroxymethyl-7,8-dihydropterin. Can also catalyze the epimerization of carbon 2' of dihydroneopterin to dihydromonapterin. The chain is Dihydroneopterin aldolase (folB) from Staphylococcus epidermidis (strain ATCC 35984 / DSM 28319 / BCRC 17069 / CCUG 31568 / BM 3577 / RP62A).